A 427-amino-acid chain; its full sequence is Terminal nucleotidyltransferase 5B (427 aa).

The tract at residues 1–49 (MMPSESGAESLEQPAAQVGTGAASAVATAGAAGGGPDPEASSASLGRHQ) is disordered. Positions 15–30 (AAQVGTGAASAVATAG) are enriched in low complexity.

It belongs to the TENT family.

It is found in the cytoplasm. Its subcellular location is the nucleus. It catalyses the reaction RNA(n) + ATP = RNA(n)-3'-adenine ribonucleotide + diphosphate. In terms of biological role, catalyzes the transfer of one adenosine molecule from an ATP to an mRNA poly(A) tail bearing a 3'-OH terminal group in an ATP hydrolysis-dependent manner. May be involved in maintaining the translation efficiency of at least some genes through preventing degradation of their mRNAs. Prefers RNA molecules that are adenosine-rich close to 3'-end. In addition, may inhibit cell proliferation and cell cycle progression through ubiquitination of beta-catenin/CTNNB1. This is Terminal nucleotidyltransferase 5B from Mus musculus (Mouse).